Reading from the N-terminus, the 776-residue chain is MNVTVDQSTLAGATRGIVRGGETLKEHRDRLMAATKATGRYAGLKTLELREREPILYNKLFSRLRAGVVDARETAKKIAASPIVEQEGELCFTLYNAAGDSLLTSTGIIIHVGTMGAAIKYMIENNWEANPGVHDKDIFCNNDSLIGNVHPCDIHTIVPIFWEGELIGWVGGVTHVIDTGAVGPGSMATGQVQRFGDGYSITCRKVGANDTLFRDWLHESQRMVRTTRYWMLDERTRIAGCHMIRKLVEEVVAEEGIEAYWKFAYEAVEHGRLGLQARIKAMTIPGTYRQVGFVDVPYAHEDVRVPSDFAKLDTIMHAPCEMTIRRDGTWRLDFEGSSRWGWHTYNAHQVSFTSGIWVMMTQTLIPSEMINDGAAYGTEFRLPKGTWMNPDDRRVAFSYSWHFLVSAWTALWRGLSRSYFGRGYLEEVNAGNANTSNWLQGGGFNQYDEIHAVNSFECAANGTGATAVQDGLSHAAAIWNPEGDMGDMEIWELAEPLVYLGRQIKASSGGSGKYRGGCGFESLRMVWNAKDWTMFFMGNGHISSDWGLMGGYPAASGYRFAAHKTNLKELIASGAEIPLGGDTDPENPTWDAMLPDAQIKRDKQAITTEEMFSDYDLYLNYMRGGPGFGDPLDREPQAVADDINGGYVLERFAGEVYGVVVRKGADGQYGVDEAGTAAARAQIRKDRLAKSVPVSEWMKGEREKILAKDAGTQVRQMFAASFKLGPRFEKDFRTFWSLPDSWTLPEEEIGVPTYGSRYSMDISELPDVHTVQFVEE.

As to quaternary structure, heterohexamer of two alpha, two beta and two gamma subunits. Fe cation is required as a cofactor. Mg(2+) serves as cofactor. It depends on Zn(2+) as a cofactor. The N-terminus is blocked.

The enzyme catalyses acetone + hydrogencarbonate + 2 ATP + 3 H2O = acetoacetate + 2 AMP + 4 phosphate + 4 H(+). Catalyzes the carboxylation of acetone to form acetoacetate. Has a reduced activity on butanone, and no activity on 2-pentatone, 3-pentatone, 2-hexanone, chloroacetone, pyruvate, phosphoenolpyruvate, acetaldehyde, propionaldehyde and propylene oxide. The sequence is that of Acetone carboxylase alpha subunit from Xanthobacter autotrophicus (strain ATCC BAA-1158 / Py2).